A 702-amino-acid polypeptide reads, in one-letter code: Phosphoglycerol transferase I (702 aa).

The next 3 helical transmembrane spans lie at 3 to 25, 73 to 95, and 102 to 124; these read WILA…LAWL, GYIA…LRVR, and GGGA…SPLY.

Belongs to the OpgB family.

Its subcellular location is the cell inner membrane. The enzyme catalyses a phosphatidylglycerol + a membrane-derived-oligosaccharide D-glucose = a 1,2-diacyl-sn-glycerol + a membrane-derived-oligosaccharide 6-(glycerophospho)-D-glucose.. It functions in the pathway glycan metabolism; osmoregulated periplasmic glucan (OPG) biosynthesis. In terms of biological role, transfers a phosphoglycerol residue from phosphatidylglycerol to the membrane-bound nascent glucan backbones. This Xanthomonas campestris pv. campestris (strain ATCC 33913 / DSM 3586 / NCPPB 528 / LMG 568 / P 25) protein is Phosphoglycerol transferase I.